Here is a 362-residue protein sequence, read N- to C-terminus: G-prodeshotein coupled receptor 4 (362 aa).

Residues 1–8 (MGNHTWEG) are Extracellular-facing. Asparagine 3 carries N-linked (GlcNAc...) asparagine glycosylation. The helical transmembrane segment at 9–45 (CHVDSRVDHLFPPSLYIFVIGVGLPTNCLALWAAYRQ) threads the bilayer. 2 disulfides stabilise this stretch: cysteine 9-cysteine 258 and cysteine 90-cysteine 168. The Cytoplasmic portion of the chain corresponds to 46–49 (VQQR). Residues 50–80 (NELGVYLMNLSIADLLYICTLPLWVDYFLHH) form a helical membrane-spanning segment. Over 81–85 (DNWIH) the chain is Extracellular. The chain crosses the membrane as a helical span at residues 86–121 (GPGSCKLFGFIFYTNIYISIAFLCCISVDRYLAVAH). Residues 122–129 (PLRFARLR) are Cytoplasmic-facing. Residues 130–156 (RVKTAVAVSSVVWATELGANSAPLFHD) form a helical membrane-spanning segment. The Extracellular portion of the chain corresponds to 157–172 (ELFRDRYNHTFCFEKF). Residues 157 to 172 (ELFRDRYNHTFCFEKF) are extracellular loop 2 (ECL2). A glycan (N-linked (GlcNAc...) asparagine) is linked at asparagine 164. Residues 173 to 210 (PMEGWVAWMNLYRVFVGFLFPWALMLLSYRGILRAVRG) traverse the membrane as a helical segment. The Cytoplasmic portion of the chain corresponds to 211–214 (SVST). A helical membrane pass occupies residues 215–250 (ERQEKAKIKRLALSLIAIVLVCFAPYHVLLLSRSAI). Topologically, residues 251 to 260 (YLGRPWDCGF) are extracellular. A helical membrane pass occupies residues 261–289 (EERVFSAYHSSLAFTSLNCVADPILYCLV). The Cytoplasmic portion of the chain corresponds to 290 to 362 (NEGARSDVAK…VQLKMLPPAQ (73 aa)). Residues 335-362 (AKAMTGSWAATPPSQGDQVQLKMLPPAQ) are disordered.

Belongs to the G-protein coupled receptor 1 family.

It localises to the cell membrane. Activated by a network of residues that connects an extracellular-facing cavity to Glu-145, a conserved charged residue buried in the transmembrane core of the receptor. Protonation likely drives conformational changes in extracellular loop 2 (ECL2), which stabilizes movement of transmembrane 3 (TM3) and a series of rearrangements that connect the extracellular-facing cavity to Glu-145, a residue only conserved in proton-sensing G-protein coupled receptors. In terms of biological role, proton-sensing G-protein coupled receptor activated by extracellular pH, which is required to monitor pH changes and generate adaptive reactions. Activated by an optimal pH of 6.8-7.2. Ligand binding causes a conformation change that triggers signaling via guanine nucleotide-binding proteins (G proteins) and modulates the activity of downstream effectors, such as adenylate cyclase. GPR4 is mainly coupled to G(s) G proteins and mediates activation of adenylate cyclase activity. May also couple with G(q) and G(12)/G(13) G proteins. Acts as a key regulator of respiratory sensitivity to CO2/H(+) in brain retrotrapezoid nucleus neurons: acts by mediating detection of protons generated by the formation of carbonic acid in the blood, an important mechanism to impulse to breathe. Also acts as a regulator of acid secretion in the kidney collecting duct by maintaining acid-base homeostasis in the kidney. Acidosis-induced GPR4 activation increases paracellular gap formation and permeability of vascular endothelial cells, possibly through the G(12)/G(13)/Rho GTPase signaling pathway. The chain is G-prodeshotein coupled receptor 4 from Homo sapiens (Human).